The primary structure comprises 636 residues: 1-deoxy-D-xylulose-5-phosphate synthase (636 aa).

Thiamine diphosphate is bound by residues histidine 72 and 113–115 (GHA). Residue aspartate 144 participates in Mg(2+) binding. Residues 145-146 (GA), asparagine 174, tyrosine 287, and glutamate 370 contribute to the thiamine diphosphate site. Residue asparagine 174 coordinates Mg(2+).

This sequence belongs to the transketolase family. DXPS subfamily. Homodimer. Requires Mg(2+) as cofactor. The cofactor is thiamine diphosphate.

The enzyme catalyses D-glyceraldehyde 3-phosphate + pyruvate + H(+) = 1-deoxy-D-xylulose 5-phosphate + CO2. It functions in the pathway metabolic intermediate biosynthesis; 1-deoxy-D-xylulose 5-phosphate biosynthesis; 1-deoxy-D-xylulose 5-phosphate from D-glyceraldehyde 3-phosphate and pyruvate: step 1/1. Its function is as follows. Catalyzes the acyloin condensation reaction between C atoms 2 and 3 of pyruvate and glyceraldehyde 3-phosphate to yield 1-deoxy-D-xylulose-5-phosphate (DXP). This Crocosphaera subtropica (strain ATCC 51142 / BH68) (Cyanothece sp. (strain ATCC 51142)) protein is 1-deoxy-D-xylulose-5-phosphate synthase.